The following is a 130-amino-acid chain: Small ribosomal subunit protein uS8 (130 aa).

Belongs to the universal ribosomal protein uS8 family. In terms of assembly, part of the 30S ribosomal subunit.

In terms of biological role, one of the primary rRNA binding proteins, it binds directly to 16S rRNA central domain where it helps coordinate assembly of the platform of the 30S subunit. This Halobacterium salinarum (strain ATCC 29341 / DSM 671 / R1) protein is Small ribosomal subunit protein uS8.